The primary structure comprises 122 residues: ATP-dependent Clp protease adapter protein ClpS (122 aa).

Residues 1–27 (MVRMATKPPSMTPTPPTGAPPRDDGGS) are disordered. A compositionally biased stretch (pro residues) spans 10 to 19 (SMTPTPPTGA).

The protein belongs to the ClpS family. In terms of assembly, binds to the N-terminal domain of the chaperone ClpA.

Its function is as follows. Involved in the modulation of the specificity of the ClpAP-mediated ATP-dependent protein degradation. This chain is ATP-dependent Clp protease adapter protein ClpS, found in Paracidovorax citrulli (strain AAC00-1) (Acidovorax citrulli).